The chain runs to 134 residues: UPF0102 protein Adeh_1910 (134 aa).

Belongs to the UPF0102 family.

This chain is UPF0102 protein Adeh_1910, found in Anaeromyxobacter dehalogenans (strain 2CP-C).